Consider the following 916-residue polypeptide: Rab3 GTPase-activating protein catalytic subunit (916 aa).

The interval asparagine 530 to valine 574 is disordered. Residues serine 543 and serine 544 each carry the phosphoserine modification. Residues glutamate 545–aspartate 562 are compositionally biased toward acidic residues.

The protein belongs to the Rab3-GAP catalytic subunit family. As to quaternary structure, the Rab3 GTPase-activating complex is a heterodimer composed of Rab3GAP1 and Rab3-GAP.

The protein localises to the cytoplasm. Catalytic subunit of the Rab3 GTPase-activating (Rab3GAP) complex composed of Rab3-GAP and Rab3GAP1, which has both GTPase-activating protein (GAP) activity towards Rab3, and guanine nucleotide exchange factor (GEF) activity towards Rab18. As part of the Rab3GAP complex, required for the rapid induction and sustained expression of synaptic homeostasis at the neuromuscular junction (NMJ). Also participates in the regulation of autophagy in tissues such as larval fat cells and adult muscles. The Rab3GAP complex, acts as a GAP for Rab3 by converting active Rab3-GTP to the inactive form Rab3-GDP. At the neuromuscular junction (NMJ), forms a presynaptic signaling mechanism with Rab3 that regulates progression of synaptic homeostasis at a late stage of vesicle release. Within this mechanism Rab3-GTP acts, directly or indirectly, to inhibit the progression of synaptic homeostasis, and Rab3-GAP functions to inactivate this action of Rab3-GTP. The Rab3GAP complex, acts as a GEF for Rab18 by promoting the conversion of inactive Rab18-GDP to the active form Rab18-GTP. Regulates autophagy as part of a Rab3GAP-Rab18 module. Once Rab18 is activated by the GEF Rab3GAP complex, the Rab3GAP-Rab18 module localizes to autophagosomes, and regulates autolysosome formation and maturation together with the Rab18 interacting effector, the PI3K/Vps34 Complex I. This chain is Rab3 GTPase-activating protein catalytic subunit, found in Drosophila melanogaster (Fruit fly).